Here is a 947-residue protein sequence, read N- to C-terminus: Zinc finger protein 268 (947 aa).

The KRAB domain maps to 81–152; sequence LSFMDVFVDF…QAQVPNQTCP (72 aa). A Phosphoserine; by TBK1 modification is found at S178. 24 consecutive C2H2-type zinc fingers follow at residues 276 to 298, 304 to 326, 332 to 354, 360 to 382, 388 to 410, 416 to 438, 444 to 466, 472 to 494, 500 to 522, 528 to 550, 556 to 578, 584 to 606, 612 to 634, 640 to 662, 668 to 690, 696 to 718, 724 to 746, 752 to 774, 780 to 802, 808 to 830, 836 to 858, 864 to 886, 892 to 914, and 920 to 942; these read FGCSCCEKAFSSKSYLLVHQQTH, YGCNECGKDFSSKSYLIVHQRIH, HECSECRKTFSFHSQLVIHQRIH, YECCECGKVFSRKDQLVSHQKTH, YVCNECGKAFGLKSQLIIHERIH, YECNECQKAFNTKSNLMVHQRTH, YVCSDCGKAFTFKSQLIVHQGIH, YGCIQCGKGFSLKSQLIVHQRSH, YVCNECGKAFRSKSYLIIHTRTH, HECNNCGKAFSFKSQLIIHQRIH, YECHECGKAFSRKYQLISHQRTH, YECTDCGKAFGLKSQLIIHQRTH, FECSECQKAFNTKSNLIVHQRTH, YSCNECGKAFTFKSQLIVHKGVH, YGCSQCAKTFSLKSQLIVHQRSH, YGCSECGKAFRSKSYLIIHMRTH, HECRECGKSFSFNSQLIVHQRIH, YECSECGKAFNRKDQLISHQRTH, YGCSECGKAFSSKSYLIIHMRTH, YECNECGKAFIWKSLLIVHERTH, YKCSQCEKSFSGKLRLLVHQRMH, YECSECGKAFIRNSQLIVHQRTH, YGCNECGKTFSQKSILSAHQRTH, and CKCTECGKAFCWKSQLIMHQRTH.

This sequence belongs to the krueppel C2H2-type zinc-finger protein family. As to quaternary structure, interacts (via the KRAB domain) with TRIM28 (via the RBCC domain); the interaction increases ZNF268 nuclear localization activity. Isoform 2 interacts with CHUK and IKBKB; the interaction is further increased in a TNF-alpha-dependent manner. Interacts with TOLLIP; this interaction is impaired by ZNF268 phosphorylation at Ser-178. Forms a ternary complex with TBK1 and SETD4; the interaction between SETD4 and TBK1 is ZNF268-dependent and leads to TBK1 monomethylation. Post-translationally, phosphorylation at Ser-178 stabilizes the protein by interfering with its binding to TOLLIP, hence impairing its degradation by Tollip-mediated selective autophagy system. Overexpressed in ovarian cancer tissues compared to normal ovarian tissues. Isoform 1 and isoform 2 are expressed in squamous epithelium tissues. Isoform 2 is overexpressed in squamous cervical cancer (at protein level). Expressed in blood cells. Isoform 1 is expressed in pancreas, lung, skeletal muscle, heart, placenta, liver, kidney and brain. Isoform 2 expressed in chronic lymphocytic leukemia (CLL) and several tumor cell lines. Isoform 3 is expressed in several tumor cells. Isoform 5 is expressed in fetal liver and several tumor cells. Isoform 6 is weakly expressed in brain, lung amd small intestin and in several tumor cells. Isoform 7 is expressed in fetal liver and several tumor cells.

It is found in the nucleus. Its subcellular location is the cytoplasm. Acts as a transcriptional repressor. Inhibits erythroid differentiation and tumor cell proliferation. Plays a role during ovarian cancer development and progression. Its function is as follows. Contributes to cervical carcinogenesis in part through the TNF-alpha-induced NF-kappa-B signaling pathway by interacting with the I-kappa-B-kinase (IKK) core complex. In terms of biological role, involved in the regulation of antiviral interferon signaling. During viral infection, recruits SETD4 to TBK1, leading to TBK1 monomethylation, which is critical for the assembly of TBK1 complex and IRF3 signaling. The chain is Zinc finger protein 268 (ZNF268) from Homo sapiens (Human).